A 110-amino-acid chain; its full sequence is Protein RnfH (110 aa).

The segment at 86 to 110 (RQRRVEKSRQEGSVEGRKWLPKDSR) is disordered. The span at 88 to 110 (RRVEKSRQEGSVEGRKWLPKDSR) shows a compositional bias: basic and acidic residues.

This sequence belongs to the UPF0125 (RnfH) family.

This Paraburkholderia phymatum (strain DSM 17167 / CIP 108236 / LMG 21445 / STM815) (Burkholderia phymatum) protein is Protein RnfH.